The primary structure comprises 65 residues: Conotoxin Am6.4 (65 aa).

Residues 1 to 33 form a disordered region; sequence STGKRNAGKLTVTDDVEADRDTDPDDKDPSVHN. Residues 1-36 constitute a propeptide that is removed on maturation; it reads STGKRNAGKLTVTDDVEADRDTDPDDKDPSVHNSWR. Positions 14–26 are enriched in acidic residues; the sequence is DDVEADRDTDPDD. Intrachain disulfides connect cysteine 40–cysteine 50, cysteine 45–cysteine 59, and cysteine 49–cysteine 64.

Post-translationally, is not hydroxylated. Expressed by the venom duct.

Its subcellular location is the secreted. Probable toxin that inhibits ion channels. This chain is Conotoxin Am6.4, found in Conus amadis (Amadis cone).